Consider the following 402-residue polypeptide: B3 domain-containing protein LFL1 (402 aa).

Residues 1–174 form a disordered region; sequence MRGEERWQEQ…AAPRPSSHHT (174 aa). The span at 74–87 shows a compositional bias: low complexity; it reads ARPPTLAASAAAAS. Positions 88–102 are enriched in pro residues; it reads SPPPPPPPPIPPLPP. Composition is skewed to low complexity over residues 103-139 and 156-169; these read STST…AAVS and PRPA…APRP. Positions 181–284 form a DNA-binding region, TF-B3; that stretch reads LQKELRYSDV…RFVIGAKKAG (104 aa). The disordered stretch occupies residues 381 to 402; the sequence is LHVTDDKSGHSLIPNPKSGPHM.

Expressed in anthers, pollen grains and young developing embryos.

It is found in the nucleus. In terms of biological role, transcription repressor involved in flowering time regulation. Represses the flowering activator EHD1 by binding specifically to the DNA sequence 5'-CATGCATG-3 of its promoter. The sequence is that of B3 domain-containing protein LFL1 (LFL1) from Oryza sativa subsp. japonica (Rice).